Reading from the N-terminus, the 282-residue chain is Pantothenate synthetase (282 aa).

31–38 lines the ATP pocket; it reads MGALHDGH. Histidine 38 functions as the Proton donor in the catalytic mechanism. Glutamine 62 provides a ligand contact to (R)-pantoate. Residue glutamine 62 participates in beta-alanine binding. 148–151 provides a ligand contact to ATP; the sequence is GKKD. (R)-pantoate is bound at residue glutamine 154. ATP contacts are provided by residues valine 177 and 185-188; that span reads KSSR.

Belongs to the pantothenate synthetase family. Homodimer.

It localises to the cytoplasm. The catalysed reaction is (R)-pantoate + beta-alanine + ATP = (R)-pantothenate + AMP + diphosphate + H(+). The protein operates within cofactor biosynthesis; (R)-pantothenate biosynthesis; (R)-pantothenate from (R)-pantoate and beta-alanine: step 1/1. Its function is as follows. Catalyzes the condensation of pantoate with beta-alanine in an ATP-dependent reaction via a pantoyl-adenylate intermediate. The polypeptide is Pantothenate synthetase (Staphylococcus saprophyticus subsp. saprophyticus (strain ATCC 15305 / DSM 20229 / NCIMB 8711 / NCTC 7292 / S-41)).